Here is a 217-residue protein sequence, read N- to C-terminus: 3,4-dihydroxy-2-butanone 4-phosphate synthase (217 aa).

Residues 37–38 (RE), Asp42, 150–154 (RRGHT), and Glu174 each bind D-ribulose 5-phosphate. Residue Glu38 coordinates Mg(2+). Mg(2+) is bound at residue His153.

The protein belongs to the DHBP synthase family. In terms of assembly, homodimer. Mg(2+) serves as cofactor. Requires Mn(2+) as cofactor.

It carries out the reaction D-ribulose 5-phosphate = (2S)-2-hydroxy-3-oxobutyl phosphate + formate + H(+). Its pathway is cofactor biosynthesis; riboflavin biosynthesis; 2-hydroxy-3-oxobutyl phosphate from D-ribulose 5-phosphate: step 1/1. Functionally, catalyzes the conversion of D-ribulose 5-phosphate to formate and 3,4-dihydroxy-2-butanone 4-phosphate. This chain is 3,4-dihydroxy-2-butanone 4-phosphate synthase, found in Pseudoalteromonas translucida (strain TAC 125).